Here is a 312-residue protein sequence, read N- to C-terminus: Malate dehydrogenase (312 aa).

NAD(+) contacts are provided by residues 12–17 (GAGFTG) and Asp36. The substrate site is built by Arg87 and Arg93. NAD(+)-binding positions include Asn100 and 123–125 (LTN). Asn125 serves as a coordination point for substrate. Ser149 carries the phosphoserine modification. A substrate-binding site is contributed by Arg156. Catalysis depends on His180, which acts as the Proton acceptor.

This sequence belongs to the LDH/MDH superfamily. MDH type 3 family.

The catalysed reaction is (S)-malate + NAD(+) = oxaloacetate + NADH + H(+). Its function is as follows. Catalyzes the reversible oxidation of malate to oxaloacetate. This Bacillus cereus (strain ATCC 14579 / DSM 31 / CCUG 7414 / JCM 2152 / NBRC 15305 / NCIMB 9373 / NCTC 2599 / NRRL B-3711) protein is Malate dehydrogenase.